The primary structure comprises 265 residues: Undecaprenyl-diphosphatase (265 aa).

Transmembrane regions (helical) follow at residues 38-58 (RSDF…CLAL), 75-95 (RDYV…GLIV), 108-128 (PVAW…HFAG), 135-155 (VVTW…GVFP), 181-201 (FVFM…LLEM), 215-235 (VAVA…WLLG), and 244-264 (VFAV…PAAA).

This sequence belongs to the UppP family.

The protein localises to the cell inner membrane. It catalyses the reaction di-trans,octa-cis-undecaprenyl diphosphate + H2O = di-trans,octa-cis-undecaprenyl phosphate + phosphate + H(+). Its function is as follows. Catalyzes the dephosphorylation of undecaprenyl diphosphate (UPP). Confers resistance to bacitracin. This is Undecaprenyl-diphosphatase from Xanthomonas axonopodis pv. citri (strain 306).